The sequence spans 483 residues: Iroquois-class homeodomain protein IRX-5 (483 aa).

The segment at residues 113 to 175 is a DNA-binding region (homeobox; TALE-type); it reads DPAYRKNATR…NARRRLKKEN (63 aa). 2 disordered regions span residues 177–392 and 423–442; these read MTWT…QCPF and GHPG…FNGL. Residues 186–203 are compositionally biased toward acidic residues; the sequence is EDEEEEENIDLEKNDEDE. Basic and acidic residues-rich tracts occupy residues 204–213 and 250–261; these read PQKPEDKGDP and SDFKEPPSEGRL. 2 stretches are compositionally biased toward low complexity: residues 266–282 and 374–388; these read GPPR…AAAR and SRAS…SPSA. Serine 274 carries the post-translational modification Phosphoserine. Serine 464 carries the phosphoserine modification.

Belongs to the TALE/IRO homeobox family.

Its subcellular location is the nucleus. Functionally, establishes the cardiac repolarization gradient by its repressive actions on the KCND2 potassium-channel gene. Required for retinal cone bipolar cell differentiation. May regulate contrast adaptation in the retina and control specific aspects of visual function in circuits of the mammalian retina. Could be involved in the regulation of both the cell cycle and apoptosis in prostate cancer cells. Involved in craniofacial and gonadal development. Modulates the migration of progenitor cell populations in branchial arches and gonads by repressing CXCL12. The protein is Iroquois-class homeodomain protein IRX-5 (IRX5) of Homo sapiens (Human).